Here is a 396-residue protein sequence, read N- to C-terminus: 8-amino-7-oxononanoate synthase (396 aa).

Substrate is bound at residue Arg19. Position 106–107 (106–107) interacts with pyridoxal 5'-phosphate; that stretch reads GY. A substrate-binding site is contributed by His131. Pyridoxal 5'-phosphate is bound by residues Ser176, His204, and Thr233. An N6-(pyridoxal phosphate)lysine modification is found at Lys236. Substrate is bound at residue Thr350.

It belongs to the class-II pyridoxal-phosphate-dependent aminotransferase family. BioF subfamily. In terms of assembly, homodimer. Pyridoxal 5'-phosphate serves as cofactor.

The catalysed reaction is 6-carboxyhexanoyl-[ACP] + L-alanine + H(+) = (8S)-8-amino-7-oxononanoate + holo-[ACP] + CO2. The protein operates within cofactor biosynthesis; biotin biosynthesis. Its function is as follows. Catalyzes the decarboxylative condensation of pimeloyl-[acyl-carrier protein] and L-alanine to produce 8-amino-7-oxononanoate (AON), [acyl-carrier protein], and carbon dioxide. This chain is 8-amino-7-oxononanoate synthase, found in Pseudomonas syringae pv. syringae (strain B728a).